Reading from the N-terminus, the 285-residue chain is UPF0354 protein SACOL1793 (285 aa).

It belongs to the UPF0354 family.

The chain is UPF0354 protein SACOL1793 from Staphylococcus aureus (strain COL).